The sequence spans 410 residues: F-box/WD-40 repeat-containing protein 1 (410 aa).

The F-box domain maps to 32–79 (SKECSLLPFELFEEILCRVPTKSLLRLKLTCKRWLALFNDKRFIYKHL). WD repeat units lie at residues 109–150 (PNKF…VRWI) and 269–309 (DVHN…NGVS).

In Arabidopsis thaliana (Mouse-ear cress), this protein is F-box/WD-40 repeat-containing protein 1 (FBW1).